The chain runs to 256 residues: Alcohol dehydrogenase (256 aa).

An NAD(+)-binding site is contributed by 12–35; it reads FVAGLGGIGLDTSKELVKRDLKNL. Residue Ser140 participates in substrate binding. Tyr153 functions as the Proton acceptor in the catalytic mechanism.

It belongs to the short-chain dehydrogenases/reductases (SDR) family. Homodimer.

It carries out the reaction a primary alcohol + NAD(+) = an aldehyde + NADH + H(+). The catalysed reaction is a secondary alcohol + NAD(+) = a ketone + NADH + H(+). The sequence is that of Alcohol dehydrogenase (Adh) from Drosophila yakuba (Fruit fly).